The primary structure comprises 322 residues: HPr kinase/phosphorylase (322 aa).

Active-site residues include His-153 and Lys-174. 168 to 175 (GRSGLGKS) lines the ATP pocket. Ser-175 is a Mg(2+) binding site. The Proton acceptor; for phosphorylation activity. Proton donor; for dephosphorylation activity role is filled by Asp-192. Residues 217–226 (MEIRGLGVVD) form an important for the catalytic mechanism of both phosphorylation and dephosphorylation region. Glu-218 provides a ligand contact to Mg(2+). Arg-259 is a catalytic residue. Positions 280–285 (PIFPGK) are important for the catalytic mechanism of dephosphorylation.

It belongs to the HPrK/P family. In terms of assembly, homohexamer. Mg(2+) is required as a cofactor.

It carries out the reaction [HPr protein]-L-serine + ATP = [HPr protein]-O-phospho-L-serine + ADP + H(+). The catalysed reaction is [HPr protein]-O-phospho-L-serine + phosphate + H(+) = [HPr protein]-L-serine + diphosphate. In terms of biological role, catalyzes the ATP- as well as the pyrophosphate-dependent phosphorylation of a specific serine residue in HPr, a phosphocarrier protein of the phosphoenolpyruvate-dependent sugar phosphotransferase system (PTS). HprK/P also catalyzes the pyrophosphate-producing, inorganic phosphate-dependent dephosphorylation (phosphorolysis) of seryl-phosphorylated HPr (P-Ser-HPr). This Chlorobium phaeobacteroides (strain DSM 266 / SMG 266 / 2430) protein is HPr kinase/phosphorylase.